We begin with the raw amino-acid sequence, 959 residues long: Glycine dehydrogenase (decarboxylating) (959 aa).

The residue at position 707 (lysine 707) is an N6-(pyridoxal phosphate)lysine.

The protein belongs to the GcvP family. As to quaternary structure, the glycine cleavage system is composed of four proteins: P, T, L and H. Requires pyridoxal 5'-phosphate as cofactor.

The enzyme catalyses N(6)-[(R)-lipoyl]-L-lysyl-[glycine-cleavage complex H protein] + glycine + H(+) = N(6)-[(R)-S(8)-aminomethyldihydrolipoyl]-L-lysyl-[glycine-cleavage complex H protein] + CO2. Functionally, the glycine cleavage system catalyzes the degradation of glycine. The P protein binds the alpha-amino group of glycine through its pyridoxal phosphate cofactor; CO(2) is released and the remaining methylamine moiety is then transferred to the lipoamide cofactor of the H protein. The sequence is that of Glycine dehydrogenase (decarboxylating) from Photobacterium profundum (strain SS9).